The primary structure comprises 67 residues: uncharacterized protein (67 aa).

It belongs to the flocculin family.

This is an uncharacterized protein from Saccharomyces cerevisiae (strain ATCC 204508 / S288c) (Baker's yeast).